The following is a 99-amino-acid chain: Aspartyl/glutamyl-tRNA(Asn/Gln) amidotransferase subunit C (99 aa).

It belongs to the GatC family. As to quaternary structure, heterotrimer of A, B and C subunits.

It carries out the reaction L-glutamyl-tRNA(Gln) + L-glutamine + ATP + H2O = L-glutaminyl-tRNA(Gln) + L-glutamate + ADP + phosphate + H(+). It catalyses the reaction L-aspartyl-tRNA(Asn) + L-glutamine + ATP + H2O = L-asparaginyl-tRNA(Asn) + L-glutamate + ADP + phosphate + 2 H(+). Functionally, allows the formation of correctly charged Asn-tRNA(Asn) or Gln-tRNA(Gln) through the transamidation of misacylated Asp-tRNA(Asn) or Glu-tRNA(Gln) in organisms which lack either or both of asparaginyl-tRNA or glutaminyl-tRNA synthetases. The reaction takes place in the presence of glutamine and ATP through an activated phospho-Asp-tRNA(Asn) or phospho-Glu-tRNA(Gln). This Mycobacterium leprae (strain Br4923) protein is Aspartyl/glutamyl-tRNA(Asn/Gln) amidotransferase subunit C.